Here is a 180-residue protein sequence, read N- to C-terminus: NADH-quinone oxidoreductase subunit I (180 aa).

4Fe-4S ferredoxin-type domains are found at residues Ile48 to Ala80 and Glu90 to Asp119. [4Fe-4S] cluster-binding residues include Cys60, Cys63, Cys66, Cys70, Cys99, Cys102, Cys105, and Cys109.

The protein belongs to the complex I 23 kDa subunit family. As to quaternary structure, NDH-1 is composed of 13 different subunits. Subunits NuoA, H, J, K, L, M, N constitute the membrane sector of the complex. It depends on [4Fe-4S] cluster as a cofactor.

The protein resides in the cell inner membrane. The enzyme catalyses a quinone + NADH + 5 H(+)(in) = a quinol + NAD(+) + 4 H(+)(out). Its function is as follows. NDH-1 shuttles electrons from NADH, via FMN and iron-sulfur (Fe-S) centers, to quinones in the respiratory chain. The immediate electron acceptor for the enzyme in this species is believed to be ubiquinone. Couples the redox reaction to proton translocation (for every two electrons transferred, four hydrogen ions are translocated across the cytoplasmic membrane), and thus conserves the redox energy in a proton gradient. In Erwinia tasmaniensis (strain DSM 17950 / CFBP 7177 / CIP 109463 / NCPPB 4357 / Et1/99), this protein is NADH-quinone oxidoreductase subunit I.